Here is a 766-residue protein sequence, read N- to C-terminus: 5-methyltetrahydropteroyltriglutamate--homocysteine methyltransferase (766 aa).

5-methyltetrahydropteroyltri-L-glutamate is bound by residues 16-19 and K119; that span reads RELK. L-homocysteine is bound by residues 440–442 and E493; that span reads IGS. Residues 440-442 and E493 contribute to the L-methionine site; that span reads IGS. Residues 524–525 and W570 each bind 5-methyltetrahydropteroyltri-L-glutamate; that span reads RC. D608 serves as a coordination point for L-homocysteine. D608 provides a ligand contact to L-methionine. E614 is a 5-methyltetrahydropteroyltri-L-glutamate binding site. Zn(2+) contacts are provided by H650, C652, and E674. H703 acts as the Proton donor in catalysis. A Zn(2+)-binding site is contributed by C735.

It belongs to the vitamin-B12 independent methionine synthase family. It depends on Zn(2+) as a cofactor.

The enzyme catalyses 5-methyltetrahydropteroyltri-L-glutamate + L-homocysteine = tetrahydropteroyltri-L-glutamate + L-methionine. It participates in amino-acid biosynthesis; L-methionine biosynthesis via de novo pathway; L-methionine from L-homocysteine (MetE route): step 1/1. Functionally, catalyzes the transfer of a methyl group from 5-methyltetrahydrofolate to homocysteine resulting in methionine formation. The sequence is that of 5-methyltetrahydropteroyltriglutamate--homocysteine methyltransferase from Pseudomonas aeruginosa (strain LESB58).